The sequence spans 253 residues: Beta-crystallin B1 (253 aa).

A compositionally biased stretch (low complexity) spans 1–18 (MSQPAAKASATAAVNPGP). Residues 1–53 (MSQPAAKASATAAVNPGPDGKGKAGPPPGPAPGSGPAPAPAPAPAQPAPAAKA) form a disordered region. S2 carries the post-translational modification N-acetylserine. Residues 2-59 (SQPAAKASATAAVNPGPDGKGKAGPPPGPAPGSGPAPAPAPAPAQPAPAAKAELPPGS) are N-terminal arm. Over residues 25–47 (GPPPGPAPGSGPAPAPAPAPAQP) the composition is skewed to pro residues. 2 consecutive Beta/gamma crystallin 'Greek key' domains span residues 60-99 (YKLV…IVTS) and 100-144 (GPWV…RPIK). Residues 145–149 (MDAQE) form a connecting peptide region. Beta/gamma crystallin 'Greek key' domains lie at 150–191 (HKLC…RVSS) and 192–234 (GTWV…RRLR). The C-terminal arm stretch occupies residues 236-253 (RQWHREGCFPVLAAEPPK).

It belongs to the beta/gamma-crystallin family. In terms of assembly, homo/heterodimer, or complexes of higher-order. The structure of beta-crystallin oligomers seems to be stabilized through interactions between the N-terminal arms. Post-translationally, specific cleavages in the N-terminal arm occur during lens maturation and give rise to truncated forms, leading to impaired oligomerization and protein insolubilization.

In terms of biological role, crystallins are the dominant structural components of the vertebrate eye lens. In Bos taurus (Bovine), this protein is Beta-crystallin B1 (CRYBB1).